Reading from the N-terminus, the 245-residue chain is Probable phosphatase YcdX (245 aa).

His7, His9, His15, His40, Glu73, His101, His131, Asp192, and His194 together coordinate Zn(2+).

The protein belongs to the PHP family. Homotrimer. The cofactor is Zn(2+).

This chain is Probable phosphatase YcdX, found in Escherichia coli O127:H6 (strain E2348/69 / EPEC).